The chain runs to 283 residues: Polyamine aminopropyltransferase (283 aa).

The PABS domain occupies 5-238 (TTWIDEYQKG…GIWSWTFASK (234 aa)). Residue Q32 participates in S-methyl-5'-thioadenosine binding. The spermidine site is built by H63 and D87. Residues E107 and 139–140 (DG) each bind S-methyl-5'-thioadenosine. Residue D158 is the Proton acceptor of the active site. Position 158–161 (158–161 (DCSD)) interacts with spermidine.

Belongs to the spermidine/spermine synthase family. Homodimer or homotetramer.

The protein localises to the cytoplasm. The catalysed reaction is S-adenosyl 3-(methylsulfanyl)propylamine + putrescine = S-methyl-5'-thioadenosine + spermidine + H(+). Its pathway is amine and polyamine biosynthesis; spermidine biosynthesis; spermidine from putrescine: step 1/1. Catalyzes the irreversible transfer of a propylamine group from the amino donor S-adenosylmethioninamine (decarboxy-AdoMet) to putrescine (1,4-diaminobutane) to yield spermidine. The polypeptide is Polyamine aminopropyltransferase (Prochlorococcus marinus (strain MIT 9515)).